The following is an 84-amino-acid chain: UPF0457 protein BC_3525 (84 aa).

This sequence belongs to the UPF0457 family.

This chain is UPF0457 protein BC_3525, found in Bacillus cereus (strain ATCC 14579 / DSM 31 / CCUG 7414 / JCM 2152 / NBRC 15305 / NCIMB 9373 / NCTC 2599 / NRRL B-3711).